Consider the following 403-residue polypeptide: Acetylornithine/succinyldiaminopimelate aminotransferase (403 aa).

Pyridoxal 5'-phosphate contacts are provided by residues 107–108 and Phe140; that span reads GA. N(2)-acetyl-L-ornithine is bound at residue Arg143. 225-228 lines the pyridoxal 5'-phosphate pocket; sequence DEVQ. An N6-(pyridoxal phosphate)lysine modification is found at Lys254. Thr282 contacts N(2)-acetyl-L-ornithine. Thr283 contributes to the pyridoxal 5'-phosphate binding site.

The protein belongs to the class-III pyridoxal-phosphate-dependent aminotransferase family. ArgD subfamily. As to quaternary structure, homodimer. Pyridoxal 5'-phosphate is required as a cofactor.

The protein resides in the cytoplasm. It catalyses the reaction N(2)-acetyl-L-ornithine + 2-oxoglutarate = N-acetyl-L-glutamate 5-semialdehyde + L-glutamate. The catalysed reaction is N-succinyl-(2S,6S)-2,6-diaminopimelate + 2-oxoglutarate = (S)-2-succinylamino-6-oxoheptanedioate + L-glutamate. It functions in the pathway amino-acid biosynthesis; L-arginine biosynthesis; N(2)-acetyl-L-ornithine from L-glutamate: step 4/4. The protein operates within amino-acid biosynthesis; L-lysine biosynthesis via DAP pathway; LL-2,6-diaminopimelate from (S)-tetrahydrodipicolinate (succinylase route): step 2/3. In terms of biological role, involved in both the arginine and lysine biosynthetic pathways. The chain is Acetylornithine/succinyldiaminopimelate aminotransferase from Photorhabdus laumondii subsp. laumondii (strain DSM 15139 / CIP 105565 / TT01) (Photorhabdus luminescens subsp. laumondii).